The following is a 123-amino-acid chain: Unknown 12C protein (123 aa).

The first 17 residues, 1–17, serve as a signal peptide directing secretion; it reads MMSALFLVLSVSLLVSG.

In terms of processing, contains 6 disulfide bonds. In terms of tissue distribution, expressed in acontia, a specialised envenomation structure laden with batteries of venom-containing nematocysts found only in the superfamily Metridioidea.

It localises to the secreted. It is found in the nematocyst. Cysteine-rich protein with probable toxin activity. This Calliactis polypus (Hermit crab anemone) protein is Unknown 12C protein.